A 930-amino-acid polypeptide reads, in one-letter code: MEGDGVPWGSEPVSGPGPGGGGGMIRELCRGFGRYRRYLGRLRQNLRETQKFFRDIKCSHNHTCLSSLTGGGGAERGPAGDVAETGLQAGQLSCISFPPKEEKYLQQIVDCLPCILILGQDCNVKCQLLNLLLGVQVLPTTKLGSEESCKLRRLRFTYGTQTRVSLALPGQYELVHTLVAHQGNWETIPEEDLEVQENNEDAAHVLAELEVTMHHALLQEVDVVVAPCQGLRPTVDVLGDLVNDFLPVITYALHKDELSERDEQELQEIRKYFSFPVFFFKVPKLGSEIIDSSTKRMESERSLLYRQLIDLGYLSSSHWNCGAPGQDTKAQSMLVEQSEKLRHLSTFSHQVLQTRLVDAAKALNLVHCHCLDIFINQAFDMQRDLQITPKRLEYTRKKENELYESLMNIANRKQEEMKDMIVETLNTMKEELLDDATNMEFKDVIVPENGEPVGTREIKCCIRQIQELIISRLNQAVANKLISSVDYLRESFVGTLERCLQSLEKSQDVSVHITSNYLKQILNAAYHVEVTFHSGSSVTRMLWEQIKQIIQRITWVSPPAITLEWKRKVAQEAIESLSASKLAKSICSQFRTRLNSSHEAFAASLRQLEAGHSGRLEKTEDLWLRVRKDHAPRLARLSLESRSLQDVLLHRKPKLGQELGRGQYGVVYLCDNWGGHFPCALKSVVPPDEKHWNDLALEFHYMRSLPKHERLVDLHGSVIDYNYGGGSSIAVLLIMERLHRDLYTGLKAGLTLETRLQIALDVVEGIRFLHSQGLVHRDIKLKNVLLDKQNRAKITDLGFCKPEAMMSGSIVGTPIHMAPELFTGKYDNSVDVYAFGILFWYICSGSVKLPEAFERCASKDHLWNNVRRGARPERLPVFDEECWQLMEACWDGDPLKRPLLGIVQPMLQGIMDRLCKSNSEQPNRGLDDST.

The segment covering 1–14 (MEGDGVPWGSEPVS) has biased composition (low complexity). The interval 1-22 (MEGDGVPWGSEPVSGPGPGGGG) is disordered. Coiled-coil stretches lie at residues 190–216 (EEDLEVQENNEDAAHVLAELEVTMHHA) and 396–432 (RKKENELYESLMNIANRKQEEMKDMIVETLNTMKEEL). One can recognise a Protein kinase domain in the interval 653–907 (PKLGQELGRG…PLLGIVQPML (255 aa)). ATP-binding positions include 659–667 (LGRGQYGVV) and lysine 682. Residue aspartate 778 is the Proton acceptor of the active site.

It belongs to the protein kinase superfamily. Ser/Thr protein kinase family.

Its subcellular location is the cytoplasm. The protein localises to the cell membrane. The protein resides in the apical cell membrane. It localises to the basolateral cell membrane. It is found in the cell junction. It carries out the reaction L-seryl-[protein] + ATP = O-phospho-L-seryl-[protein] + ADP + H(+). The enzyme catalyses L-threonyl-[protein] + ATP = O-phospho-L-threonyl-[protein] + ADP + H(+). It catalyses the reaction L-tyrosyl-[protein] + ATP = O-phospho-L-tyrosyl-[protein] + ADP + H(+). Functionally, acts as a positive regulator of ERK phosphorylation downstream of fibroblast growth factor-receptor activation. Involved in the regulation of both caspase-dependent apoptosis and caspase-independent cell death. In the skin, it plays a predominant role in suppressing caspase-dependent apoptosis in response to UV stress in a range of dermal cell types. This Pan troglodytes (Chimpanzee) protein is Dual serine/threonine and tyrosine protein kinase (DSTYK).